A 146-amino-acid chain; its full sequence is Small RNA-binding protein 11, chloroplastic (146 aa).

The N-terminal 31 residues, 1-31 (MAALARIGGRHLKSVCLINSSASCFFTQRRG), are a transit peptide targeting the chloroplast. Positions 34–112 (SKLFIGGLSF…RTIFVDYAKA (79 aa)) constitute an RRM domain. The residue at position 42 (S42) is a Phosphoserine.

In terms of tissue distribution, expressed in rosette leaves, cauline leaves, stems and flowers.

Its subcellular location is the plastid. The protein localises to the chloroplast. In terms of biological role, probable RNA-binding protein that may be involved in salt and oxidative stress tolerance. The protein is Small RNA-binding protein 11, chloroplastic of Arabidopsis thaliana (Mouse-ear cress).